The chain runs to 787 residues: (-)-kolavenyl diphosphate synthase, chloroplastic (787 aa).

A chloroplast-targeting transit peptide spans 1-47 (MSFATSLPRPTTTGAAGFGLPLATCISLSVSHSFSPKFGICNNTSLR). Lysine 237 provides a ligand contact to substrate. Mg(2+)-binding residues include aspartate 368 and aspartate 370. The DXDD motif signature appears at 368 to 371 (DSDD). Position 454 (lysine 454) interacts with substrate.

Belongs to the terpene synthase family. Tpsc subfamily. It depends on Mg(2+) as a cofactor. In terms of tissue distribution, expressed in peltate glandular trichomes of leaves. Highly expressed in the first leaf pair.

The protein localises to the plastid. The protein resides in the chloroplast. It carries out the reaction (2E,6E,10E)-geranylgeranyl diphosphate = (-)-kolavenyl diphosphate. Its activity is regulated as follows. Inhibited by high concentrations of magnesium. Involved in the biosynthesis of clerodane diterpenoids natural products, including salvinorin A with potent agonistic activity on brain kappa-opioid receptors, thus conferring hallucinogenic properties. Diterpene synthase that catalyzes the formation of (-)-kolavenyl diphosphate from geranylgeranyl diphosphate (GGPP) as the first reaction in salvinorin A biosynthesis. This chain is (-)-kolavenyl diphosphate synthase, chloroplastic, found in Salvia divinorum (Maria pastora).